A 743-amino-acid polypeptide reads, in one-letter code: Phosphoribosylformylglycinamidine synthase subunit PurL (743 aa).

His54 is a catalytic residue. ATP contacts are provided by Tyr57 and Lys96. Glu98 lines the Mg(2+) pocket. Substrate-binding positions include 99-102 (SHNH) and Arg121. Catalysis depends on His100, which acts as the Proton acceptor. A Mg(2+)-binding site is contributed by Asp122. Residue Gln245 participates in substrate binding. Asp273 is a binding site for Mg(2+). 317-319 (ESQ) provides a ligand contact to substrate. Residues Asp501 and Gly538 each contribute to the ATP site. Asn539 is a Mg(2+) binding site. Position 541 (Ser541) interacts with substrate.

It belongs to the FGAMS family. In terms of assembly, monomer. Part of the FGAM synthase complex composed of 1 PurL, 1 PurQ and 2 PurS subunits.

It localises to the cytoplasm. The catalysed reaction is N(2)-formyl-N(1)-(5-phospho-beta-D-ribosyl)glycinamide + L-glutamine + ATP + H2O = 2-formamido-N(1)-(5-O-phospho-beta-D-ribosyl)acetamidine + L-glutamate + ADP + phosphate + H(+). Its pathway is purine metabolism; IMP biosynthesis via de novo pathway; 5-amino-1-(5-phospho-D-ribosyl)imidazole from N(2)-formyl-N(1)-(5-phospho-D-ribosyl)glycinamide: step 1/2. Part of the phosphoribosylformylglycinamidine synthase complex involved in the purines biosynthetic pathway. Catalyzes the ATP-dependent conversion of formylglycinamide ribonucleotide (FGAR) and glutamine to yield formylglycinamidine ribonucleotide (FGAM) and glutamate. The FGAM synthase complex is composed of three subunits. PurQ produces an ammonia molecule by converting glutamine to glutamate. PurL transfers the ammonia molecule to FGAR to form FGAM in an ATP-dependent manner. PurS interacts with PurQ and PurL and is thought to assist in the transfer of the ammonia molecule from PurQ to PurL. The polypeptide is Phosphoribosylformylglycinamidine synthase subunit PurL (Halalkalibacterium halodurans (strain ATCC BAA-125 / DSM 18197 / FERM 7344 / JCM 9153 / C-125) (Bacillus halodurans)).